Reading from the N-terminus, the 599-residue chain is MKNIRNFSIIAHIDHGKSTLSDRIIQICGGLSDREMEAQVLDSMDLERERGITIKAQSVTLDFKASDGETYQLNFIDTPGHVDFSYEVSRSLAACEGALLVVDAGQGVEAQTLANCYTAMEMDLEVVPVLNKIDLPAADPERVAEEIEDIVGIDATDAVRCSAKTGVGVTDVLERLVRDIPPPQGDPDGPLQALIIDSWFDNYLGVVSLVRIKNGTMRKGDKIKVMSTGQTYNADRLGIFTPKQVDRTELKCGEVGWLVCAIKDILGAPVGDTLTSARNPAEKALPGFKKVKPQVYAGLFPVSSDDYESFRDALGKLSLNDASLFYEPENSSALGFGFRCGFLGLLHMEIIQERLEREYDLDLITTAPTVVYEVETTAKEIIYVDSPSKLPPLNNIYELREPIAECHMLLPQAYLGNVITLCIEKRGVQTNMVYHGNQVALTYEIPMAEVVLDFFDRLKSTSRGYASLDYNFKRFQASDMVRVDVLINNERVDALALITHRDNAQNRGRELVDKMKDLIPRQQFDIAIQAAIGTHIIARSTVKQLRKNVLAKCYGGDISRKKKLLQKQKEGKKRMKQIGNVELPQEAFLAILHVGKDNK.

A tr-type G domain is found at 2–184 (KNIRNFSIIA…RLVRDIPPPQ (183 aa)). GTP contacts are provided by residues 14–19 (DHGKST) and 131–134 (NKID).

This sequence belongs to the TRAFAC class translation factor GTPase superfamily. Classic translation factor GTPase family. LepA subfamily.

The protein localises to the cell inner membrane. The catalysed reaction is GTP + H2O = GDP + phosphate + H(+). Functionally, required for accurate and efficient protein synthesis under certain stress conditions. May act as a fidelity factor of the translation reaction, by catalyzing a one-codon backward translocation of tRNAs on improperly translocated ribosomes. Back-translocation proceeds from a post-translocation (POST) complex to a pre-translocation (PRE) complex, thus giving elongation factor G a second chance to translocate the tRNAs correctly. Binds to ribosomes in a GTP-dependent manner. The protein is Elongation factor 4 of Salmonella arizonae (strain ATCC BAA-731 / CDC346-86 / RSK2980).